The chain runs to 304 residues: MNWITNYVRPKINSMLGRREVPENLWIKCPETGEMVFHRDLEENKWVIPQSGFHMKMPAKARLKDLFDGGIYEAFPQPKVAQDPLKFRDSKKYSDRLRDSRAKTELEDTIVAGLGQVQGIKLVAVAHEFNFIGGSLGIAAGEAIVKAFERAIAEKCPLVMFPASGGARMQEGILSLMQLPRTTVALNMLKEAGLPYIVVLTNPTTGGVTASYAMLGDIHMAEPGAEIGFAGKRVIEQTLREKLPEGFQTSEYLLEHGMVDMVVKRHDIPETLARVLNILMKKPAKAVKRDTATELAPLPVAASA.

Residues L25–E294 form the CoA carboxyltransferase N-terminal domain.

Belongs to the AccD/PCCB family. In terms of assembly, acetyl-CoA carboxylase is a heterohexamer composed of biotin carboxyl carrier protein (AccB), biotin carboxylase (AccC) and two subunits each of ACCase subunit alpha (AccA) and ACCase subunit beta (AccD).

The protein resides in the cytoplasm. It catalyses the reaction N(6)-carboxybiotinyl-L-lysyl-[protein] + acetyl-CoA = N(6)-biotinyl-L-lysyl-[protein] + malonyl-CoA. The protein operates within lipid metabolism; malonyl-CoA biosynthesis; malonyl-CoA from acetyl-CoA: step 1/1. Functionally, component of the acetyl coenzyme A carboxylase (ACC) complex. Biotin carboxylase (BC) catalyzes the carboxylation of biotin on its carrier protein (BCCP) and then the CO(2) group is transferred by the transcarboxylase to acetyl-CoA to form malonyl-CoA. In Rhizobium meliloti (strain 1021) (Ensifer meliloti), this protein is Acetyl-coenzyme A carboxylase carboxyl transferase subunit beta.